Reading from the N-terminus, the 49-residue chain is Large ribosomal subunit protein eL40 (49 aa).

It belongs to the eukaryotic ribosomal protein eL40 family.

This is Large ribosomal subunit protein eL40 from Methanosarcina barkeri (strain Fusaro / DSM 804).